The sequence spans 883 residues: AP-5 complex subunit beta-1 (883 aa).

Probably part of the adaptor protein complex 5 (AP-5).

Functionally, as part of AP-5, a probable fifth adaptor protein complex, it may be involved in endosomal transport. The protein is AP-5 complex subunit beta-1 (ap5b1) of Xenopus tropicalis (Western clawed frog).